Consider the following 526-residue polypeptide: MPQRFIVVTGGVLSGIGKGIFSASLARILKDSGVNVNILKIDPYLNVDAGTMNPNQHGEVFVTDDGYEADLDLGHYERFLGINVSRKNNITAGQIYYSVIKREREGKYLGSTVQIVPHVTSEIKDRIKTMDGDLLVIEIGGTVGDIEGEVFLEAVRELAFEIGREKFHFVHVTYVPYLRTTNEFKTKPTQQSVQLLRRIGIHPDTIIVRTEMPIDANSLFKVSLFSGVPRNRVINLPDASNVYEVPDVLHSLNLHKLIAKELDIDINDRFNWSYPKSFELLKIGIVGKYLGTDDAYKSIIESIYLSGAQKPIVIDAQELEDMTDEQIKNYLDDFDALIIPGGFGRRGIEGKIKAIKYARENKKPILGICLGMQLMAIEFARNVGKLEGANSTEFDENTPYPVVNMMESQKEVLNLGGTMRLGAQKTQIMKGTLLSRIYDGQEVVYERHRHRYEVDAEAFPQLFKNPGEEGYKLTISARSDFVEAVELDDHPFFVGIQYHPEYKSKVGKPHPIFKWLVKAAGGKIND.

An amidoligase domain region spans residues 1–264 (MPQRFIVVTG…HKLIAKELDI (264 aa)). Ser-14 provides a ligand contact to CTP. A UTP-binding site is contributed by Ser-14. ATP is bound by residues 15-20 (GIGKGI) and Asp-72. The Mg(2+) site is built by Asp-72 and Glu-138. CTP is bound by residues 145–147 (DIE), 185–190 (KTKPTQ), and Lys-221. UTP contacts are provided by residues 185 to 190 (KTKPTQ) and Lys-221. In terms of domain architecture, Glutamine amidotransferase type-1 spans 282-526 (KIGIVGKYLG…VKAAGGKIND (245 aa)). Residue Gly-342 coordinates L-glutamine. Catalysis depends on Cys-369, which acts as the Nucleophile; for glutamine hydrolysis. L-glutamine-binding positions include 370–373 (LGMQ), Glu-393, and Arg-451. Catalysis depends on residues His-499 and Glu-501.

The protein belongs to the CTP synthase family. As to quaternary structure, homotetramer.

It carries out the reaction UTP + L-glutamine + ATP + H2O = CTP + L-glutamate + ADP + phosphate + 2 H(+). The enzyme catalyses L-glutamine + H2O = L-glutamate + NH4(+). It catalyses the reaction UTP + NH4(+) + ATP = CTP + ADP + phosphate + 2 H(+). Its pathway is pyrimidine metabolism; CTP biosynthesis via de novo pathway; CTP from UDP: step 2/2. With respect to regulation, allosterically activated by GTP, when glutamine is the substrate; GTP has no effect on the reaction when ammonia is the substrate. The allosteric effector GTP functions by stabilizing the protein conformation that binds the tetrahedral intermediate(s) formed during glutamine hydrolysis. Inhibited by the product CTP, via allosteric rather than competitive inhibition. Its function is as follows. Catalyzes the ATP-dependent amination of UTP to CTP with either L-glutamine or ammonia as the source of nitrogen. Regulates intracellular CTP levels through interactions with the four ribonucleotide triphosphates. This Thermosipho africanus (strain TCF52B) protein is CTP synthase.